We begin with the raw amino-acid sequence, 353 residues long: Phosphoribosylformylglycinamidine cyclo-ligase (353 aa).

It belongs to the AIR synthase family.

It is found in the cytoplasm. It catalyses the reaction 2-formamido-N(1)-(5-O-phospho-beta-D-ribosyl)acetamidine + ATP = 5-amino-1-(5-phospho-beta-D-ribosyl)imidazole + ADP + phosphate + H(+). The protein operates within purine metabolism; IMP biosynthesis via de novo pathway; 5-amino-1-(5-phospho-D-ribosyl)imidazole from N(2)-formyl-N(1)-(5-phospho-D-ribosyl)glycinamide: step 2/2. This Ralstonia nicotianae (strain ATCC BAA-1114 / GMI1000) (Ralstonia solanacearum) protein is Phosphoribosylformylglycinamidine cyclo-ligase.